The chain runs to 162 residues: NADH-quinone oxidoreductase subunit I (162 aa).

2 consecutive 4Fe-4S ferredoxin-type domains span residues 53-83 and 93-122; these read LRRY…IESE and TRYD…EGPN. Residues C63, C66, C69, C73, C102, C105, C108, and C112 each contribute to the [4Fe-4S] cluster site.

The protein belongs to the complex I 23 kDa subunit family. In terms of assembly, NDH-1 is composed of 14 different subunits. Subunits NuoA, H, J, K, L, M, N constitute the membrane sector of the complex. Requires [4Fe-4S] cluster as cofactor.

Its subcellular location is the cell inner membrane. The catalysed reaction is a quinone + NADH + 5 H(+)(in) = a quinol + NAD(+) + 4 H(+)(out). Its function is as follows. NDH-1 shuttles electrons from NADH, via FMN and iron-sulfur (Fe-S) centers, to quinones in the respiratory chain. The immediate electron acceptor for the enzyme in this species is believed to be ubiquinone. Couples the redox reaction to proton translocation (for every two electrons transferred, four hydrogen ions are translocated across the cytoplasmic membrane), and thus conserves the redox energy in a proton gradient. This chain is NADH-quinone oxidoreductase subunit I, found in Erythrobacter litoralis (strain HTCC2594).